A 223-amino-acid polypeptide reads, in one-letter code: Pyridoxine/pyridoxamine 5'-phosphate oxidase (223 aa).

Residues 8-11 (RVDY) and lysine 65 each bind substrate. Residues 60–65 (RTVLLK), 75–76 (YT), arginine 81, lysine 82, and glutamine 104 each bind FMN. Residues tyrosine 122, arginine 126, and serine 130 each coordinate substrate. FMN is bound by residues 139–140 (QS) and tryptophan 188. Substrate is bound at residue 194–196 (RLH). Arginine 198 contacts FMN.

The protein belongs to the pyridoxamine 5'-phosphate oxidase family. Homodimer. Requires FMN as cofactor.

The catalysed reaction is pyridoxamine 5'-phosphate + O2 + H2O = pyridoxal 5'-phosphate + H2O2 + NH4(+). The enzyme catalyses pyridoxine 5'-phosphate + O2 = pyridoxal 5'-phosphate + H2O2. It participates in cofactor metabolism; pyridoxal 5'-phosphate salvage; pyridoxal 5'-phosphate from pyridoxamine 5'-phosphate: step 1/1. The protein operates within cofactor metabolism; pyridoxal 5'-phosphate salvage; pyridoxal 5'-phosphate from pyridoxine 5'-phosphate: step 1/1. Functionally, catalyzes the oxidation of either pyridoxine 5'-phosphate (PNP) or pyridoxamine 5'-phosphate (PMP) into pyridoxal 5'-phosphate (PLP). This chain is Pyridoxine/pyridoxamine 5'-phosphate oxidase, found in Kineococcus radiotolerans (strain ATCC BAA-149 / DSM 14245 / SRS30216).